The following is a 104-amino-acid chain: Large ribosomal subunit protein cL38 (104 aa).

The N-terminal 39 residues, 1-39 (MASVSSIFGCGVSMAPNSSLRNKAIRTERRSACGGLLIE), are a transit peptide targeting the chloroplast. The disordered stretch occupies residues 42-76 (SRPQKKSTAHHMKTRPRKSRLSDRNRKPTVYAPLP). The span at 44-60 (PQKKSTAHHMKTRPRKS) shows a compositional bias: basic residues.

This sequence belongs to the chloroplast-specific ribosomal protein cL38 family. As to quaternary structure, part of the 50S ribosomal subunit.

Its subcellular location is the plastid. The protein resides in the chloroplast. This Pisum sativum (Garden pea) protein is Large ribosomal subunit protein cL38 (PSRP6).